We begin with the raw amino-acid sequence, 107 residues long: ATP-dependent Clp protease adapter protein ClpS (107 aa).

Positions 1 to 12 (MSGDKDFDKDSD) are enriched in basic and acidic residues. Residues 1 to 21 (MSGDKDFDKDSDVTVITRTTP) form a disordered region.

Belongs to the ClpS family. As to quaternary structure, binds to the N-terminal domain of the chaperone ClpA.

In terms of biological role, involved in the modulation of the specificity of the ClpAP-mediated ATP-dependent protein degradation. This is ATP-dependent Clp protease adapter protein ClpS from Zymomonas mobilis subsp. mobilis (strain ATCC 31821 / ZM4 / CP4).